A 238-amino-acid polypeptide reads, in one-letter code: Ubiquinone biosynthesis O-methyltransferase (238 aa).

4 residues coordinate S-adenosyl-L-methionine: arginine 40, glycine 59, aspartate 81, and methionine 126.

The protein belongs to the methyltransferase superfamily. UbiG/COQ3 family.

The catalysed reaction is a 3-demethylubiquinol + S-adenosyl-L-methionine = a ubiquinol + S-adenosyl-L-homocysteine + H(+). The enzyme catalyses a 3-(all-trans-polyprenyl)benzene-1,2-diol + S-adenosyl-L-methionine = a 2-methoxy-6-(all-trans-polyprenyl)phenol + S-adenosyl-L-homocysteine + H(+). It participates in cofactor biosynthesis; ubiquinone biosynthesis. In terms of biological role, O-methyltransferase that catalyzes the 2 O-methylation steps in the ubiquinone biosynthetic pathway. The protein is Ubiquinone biosynthesis O-methyltransferase of Neisseria meningitidis serogroup A / serotype 4A (strain DSM 15465 / Z2491).